The primary structure comprises 339 residues: Phenylalanine--tRNA ligase alpha subunit (339 aa).

Glutamate 250 is a Mg(2+) binding site.

This sequence belongs to the class-II aminoacyl-tRNA synthetase family. Phe-tRNA synthetase alpha subunit type 1 subfamily. In terms of assembly, tetramer of two alpha and two beta subunits. The cofactor is Mg(2+).

Its subcellular location is the cytoplasm. The catalysed reaction is tRNA(Phe) + L-phenylalanine + ATP = L-phenylalanyl-tRNA(Phe) + AMP + diphosphate + H(+). The chain is Phenylalanine--tRNA ligase alpha subunit from Flavobacterium johnsoniae (strain ATCC 17061 / DSM 2064 / JCM 8514 / BCRC 14874 / CCUG 350202 / NBRC 14942 / NCIMB 11054 / UW101) (Cytophaga johnsonae).